Here is a 31-residue protein sequence, read N- to C-terminus: Phalloidin proprotein (31 aa).

Positions 1 to 10 (MSDINATRLP) are excised as a propeptide. A cross-link (cyclopeptide (Ala-Pro)) is located at residues 11 to 17 (AWLATCP). The segment at residues 12-16 (WLATC) is a cross-link (2'-cysteinyl-6'-hydroxytryptophan sulfoxide (Trp-Cys)). Positions 18 to 31 (CAGDDVNPLLTRGE) are excised as a propeptide.

This sequence belongs to the MSDIN fungal toxin family. In terms of processing, processed by the macrocyclase-peptidase enzyme POPB to yield a toxic cyclic heptapeptide. POPB first removes 10 residues from the N-terminus. Conformational trapping of the remaining peptide forces the enzyme to release this intermediate rather than proceed to macrocyclization. The enzyme rebinds the remaining peptide in a different conformation and catalyzes macrocyclization of the N-terminal 7 residues.

Functionally, major toxin that belongs to the bicyclic heptapeptides called phallotoxins. Although structurally related to amatoxins, phallotoxins have a different mode of action, which is the stabilization of F-actin. Phallotoxins are poisonous when administered parenterally, but not orally because of poor absorption. This chain is Phalloidin proprotein, found in Amanita ocreata (Western North American destroying angel).